Consider the following 61-residue polypeptide: Large ribosomal subunit protein uL29 (61 aa).

The protein belongs to the universal ribosomal protein uL29 family.

This Campylobacter curvus (strain 525.92) protein is Large ribosomal subunit protein uL29.